Here is a 179-residue protein sequence, read N- to C-terminus: MLRLAIPLFLFALCSFTLFSSARSFITTKPLPIDSFIPKPKLENAAACSYTVIIKTSCSSVSYTRDKISISFGDVYGNEVYVKRLDDPSSRTFEKCSSDTYKISGPCMRDVCYLYLLRQGSDGWKPENVKIYGSSIRSVTFYYNLFLPNSVWYGFNVCNGIGNTKSSQPISTTSSVAAM.

A signal peptide spans 1–22 (MLRLAIPLFLFALCSFTLFSSA). The PLAT domain occupies 48-158 (CSYTVIIKTS…NSVWYGFNVC (111 aa)).

In terms of assembly, interacts with EULS3 (via N-terminus). As to expression, expressed in roots, rosette leaves, stems, cauline leaves and flowers.

It is found in the secreted. May play a role during embryo development. The protein is Embryo-specific protein ATS3A of Arabidopsis thaliana (Mouse-ear cress).